A 100-amino-acid polypeptide reads, in one-letter code: Small ribosomal subunit protein uS14c (100 aa).

Belongs to the universal ribosomal protein uS14 family. Part of the 30S ribosomal subunit.

The protein resides in the plastid. Functionally, binds 16S rRNA, required for the assembly of 30S particles. The protein is Small ribosomal subunit protein uS14c (rps14) of Cuscuta gronovii (Common dodder).